The following is a 220-amino-acid chain: 3-keto-L-gulonate-6-phosphate decarboxylase SgbH (220 aa).

Residue Asp11 participates in substrate binding. Mg(2+)-binding residues include Glu33 and Asp62. Arg192 serves as a coordination point for substrate.

This sequence belongs to the HPS/KGPDC family. KGPDC subfamily. In terms of assembly, homodimer. The cofactor is Mg(2+).

It catalyses the reaction 3-dehydro-L-gulonate 6-phosphate + H(+) = L-xylulose 5-phosphate + CO2. Functionally, catalyzes the decarboxylation of 3-keto-L-gulonate-6-P into L-xylulose-5-P. May be involved in the utilization of 2,3-diketo-L-gulonate. In Escherichia coli (strain K12), this protein is 3-keto-L-gulonate-6-phosphate decarboxylase SgbH (sgbH).